A 569-amino-acid polypeptide reads, in one-letter code: Urease subunit alpha (569 aa).

The Ni(2+) site is built by His136, His138, and Lys219. An N6-carboxylysine modification is found at Lys219. A substrate-binding site is contributed by His221. Residues His248 and His274 each coordinate Ni(2+). The active-site Proton donor is His322. Asp362 provides a ligand contact to Ni(2+).

Belongs to the metallo-dependent hydrolases superfamily. Urease alpha subunit family. As to quaternary structure, heterotrimer of UreA (gamma), UreB (beta) and UreC (alpha) subunits. Three heterotrimers associate to form the active enzyme. Ni cation is required as a cofactor. Post-translationally, carboxylation allows a single lysine to coordinate two nickel ions.

It localises to the cytoplasm. It catalyses the reaction urea + 2 H2O + H(+) = hydrogencarbonate + 2 NH4(+). It participates in nitrogen metabolism; urea degradation; CO(2) and NH(3) from urea (urease route): step 1/1. The chain is Urease subunit alpha from Dinoroseobacter shibae (strain DSM 16493 / NCIMB 14021 / DFL 12).